A 132-amino-acid chain; its full sequence is Small ribosomal subunit protein uS8 (132 aa).

This sequence belongs to the universal ribosomal protein uS8 family. In terms of assembly, part of the 30S ribosomal subunit. Contacts proteins S5 and S12.

Functionally, one of the primary rRNA binding proteins, it binds directly to 16S rRNA central domain where it helps coordinate assembly of the platform of the 30S subunit. The protein is Small ribosomal subunit protein uS8 of Streptococcus pyogenes serotype M49 (strain NZ131).